Reading from the N-terminus, the 205-residue chain is Small ribosomal subunit protein uS4 (205 aa).

A compositionally biased stretch (basic residues) spans 1-12 (MSKRVQAKHKLD). The segment at 1-49 (MSKRVQAKHKLDRRMGQNIWGRPKSPVNRREYGPGQHGQRRKGKMSDFG) is disordered. One can recognise an S4 RNA-binding domain in the interval 94 to 155 (RRLDAVVYRS…ASRQLEIVVV (62 aa)).

The protein belongs to the universal ribosomal protein uS4 family. As to quaternary structure, part of the 30S ribosomal subunit. Contacts protein S5. The interaction surface between S4 and S5 is involved in control of translational fidelity.

In terms of biological role, one of the primary rRNA binding proteins, it binds directly to 16S rRNA where it nucleates assembly of the body of the 30S subunit. With S5 and S12 plays an important role in translational accuracy. The chain is Small ribosomal subunit protein uS4 from Methylorubrum extorquens (strain CM4 / NCIMB 13688) (Methylobacterium extorquens).